Consider the following 192-residue polypeptide: UPF0316 protein SSP0880 (192 aa).

3 helical membrane passes run 8–28 (PWLM…CLTM), 40–60 (VAAI…GMVM), and 66–86 (IQNV…GMKI).

The protein belongs to the UPF0316 family.

It localises to the cell membrane. This Staphylococcus saprophyticus subsp. saprophyticus (strain ATCC 15305 / DSM 20229 / NCIMB 8711 / NCTC 7292 / S-41) protein is UPF0316 protein SSP0880.